A 113-amino-acid chain; its full sequence is Small ribosomal subunit protein mS41 (113 aa).

Residues 1-22 constitute a mitochondrion transit peptide; it reads MLILKRIFIIRNFIFPFSNCRY.

Belongs to the mitochondrion-specific ribosomal protein mS41 family. In terms of assembly, component of the mitochondrial small ribosomal subunit (mt-SSU). Mature yeast 74S mitochondrial ribosomes consist of a small (37S) and a large (54S) subunit. The 37S small subunit contains a 15S ribosomal RNA (15S mt-rRNA) and at least 32 different proteins. The 54S large subunit contains a 21S rRNA (21S mt-rRNA) and at least 45 different proteins.

It localises to the mitochondrion. In terms of biological role, component of the mitochondrial ribosome (mitoribosome), a dedicated translation machinery responsible for the synthesis of mitochondrial genome-encoded proteins, including at least some of the essential transmembrane subunits of the mitochondrial respiratory chain. The mitoribosomes are attached to the mitochondrial inner membrane and translation products are cotranslationally integrated into the membrane. mS41 is involved in telomere length regulation. This Schizosaccharomyces pombe (strain 972 / ATCC 24843) (Fission yeast) protein is Small ribosomal subunit protein mS41 (fyv4).